The sequence spans 66 residues: Large ribosomal subunit protein bL35 (66 aa).

Over residues 1–16 (MPKQKTHRASAKRFKR) the composition is skewed to basic residues. The segment at 1-20 (MPKQKTHRASAKRFKRTGSG) is disordered.

The protein belongs to the bacterial ribosomal protein bL35 family.

This Streptococcus thermophilus (strain ATCC BAA-250 / LMG 18311) protein is Large ribosomal subunit protein bL35.